The chain runs to 238 residues: Ribonuclease PH (238 aa).

Phosphate is bound by residues Arg86 and 124-126; that span reads GTR.

The protein belongs to the RNase PH family. In terms of assembly, homodimer. Has a tendency to aggregate into multimers. Requires Mg(2+) as cofactor.

It carries out the reaction tRNA(n+1) + phosphate = tRNA(n) + a ribonucleoside 5'-diphosphate. Functionally, phosphorolytic exoribonuclease that plays an important role in tRNA 3'-end maturation; has no activity on a tRNA precursor with a 3'-terminal phosphate group. In vitro is freely reversible, adds nucleotides to the ends of RNA molecules by using nucleoside diphosphates as substrates, but this may not be physiologically important. Probably plays a role in initiation of 16S rRNA degradation (leading to ribosome degradation) during starvation. The chain is Ribonuclease PH from Escherichia coli (strain K12 / MC4100 / BW2952).